The chain runs to 432 residues: Trigger factor (432 aa).

The PPIase FKBP-type domain maps to 163 to 248 (GDIAVIDFEG…LKALNKKELP (86 aa)).

This sequence belongs to the FKBP-type PPIase family. Tig subfamily.

The protein localises to the cytoplasm. It catalyses the reaction [protein]-peptidylproline (omega=180) = [protein]-peptidylproline (omega=0). Its function is as follows. Involved in protein export. Acts as a chaperone by maintaining the newly synthesized protein in an open conformation. Functions as a peptidyl-prolyl cis-trans isomerase. This chain is Trigger factor, found in Caldanaerobacter subterraneus subsp. tengcongensis (strain DSM 15242 / JCM 11007 / NBRC 100824 / MB4) (Thermoanaerobacter tengcongensis).